Consider the following 617-residue polypeptide: Dihydroxy-acid dehydratase (617 aa).

Aspartate 81 contributes to the Mg(2+) binding site. Cysteine 122 is a [2Fe-2S] cluster binding site. Mg(2+)-binding residues include aspartate 123 and lysine 124. The residue at position 124 (lysine 124) is an N6-carboxylysine. Cysteine 195 is a binding site for [2Fe-2S] cluster. Glutamate 491 is a binding site for Mg(2+). The active-site Proton acceptor is serine 517.

It belongs to the IlvD/Edd family. In terms of assembly, homodimer. [2Fe-2S] cluster serves as cofactor. It depends on Mg(2+) as a cofactor.

The enzyme catalyses (2R)-2,3-dihydroxy-3-methylbutanoate = 3-methyl-2-oxobutanoate + H2O. It carries out the reaction (2R,3R)-2,3-dihydroxy-3-methylpentanoate = (S)-3-methyl-2-oxopentanoate + H2O. Its pathway is amino-acid biosynthesis; L-isoleucine biosynthesis; L-isoleucine from 2-oxobutanoate: step 3/4. It participates in amino-acid biosynthesis; L-valine biosynthesis; L-valine from pyruvate: step 3/4. Functionally, functions in the biosynthesis of branched-chain amino acids. Catalyzes the dehydration of (2R,3R)-2,3-dihydroxy-3-methylpentanoate (2,3-dihydroxy-3-methylvalerate) into 2-oxo-3-methylpentanoate (2-oxo-3-methylvalerate) and of (2R)-2,3-dihydroxy-3-methylbutanoate (2,3-dihydroxyisovalerate) into 2-oxo-3-methylbutanoate (2-oxoisovalerate), the penultimate precursor to L-isoleucine and L-valine, respectively. This is Dihydroxy-acid dehydratase from Nitrosococcus oceani (strain ATCC 19707 / BCRC 17464 / JCM 30415 / NCIMB 11848 / C-107).